A 136-amino-acid polypeptide reads, in one-letter code: Thiosulfate sulfurtransferase 18 (136 aa).

Residues 26-128 (LQSGHQYLDV…WVDHSFPINT (103 aa)) form the Rhodanese domain. C88 serves as the catalytic Cysteine persulfide intermediate.

Its subcellular location is the cytoplasm. It catalyses the reaction thiosulfate + hydrogen cyanide = thiocyanate + sulfite + 2 H(+). Functionally, catalyzes the transfer of a sulfur ion from a donor to cyanide or to other thiol compounds. Substrate preference is thiosulfate &gt; 3-mercaptopyruvate. This chain is Thiosulfate sulfurtransferase 18 (STR18), found in Arabidopsis thaliana (Mouse-ear cress).